The primary structure comprises 105 residues: DNA-directed RNA polymerase subunit omega (105 aa).

This sequence belongs to the RNA polymerase subunit omega family. In terms of assembly, the RNAP catalytic core consists of 2 alpha, 1 beta, 1 beta' and 1 omega subunit. When a sigma factor is associated with the core the holoenzyme is formed, which can initiate transcription.

It catalyses the reaction RNA(n) + a ribonucleoside 5'-triphosphate = RNA(n+1) + diphosphate. Functionally, promotes RNA polymerase assembly. Latches the N- and C-terminal regions of the beta' subunit thereby facilitating its interaction with the beta and alpha subunits. The polypeptide is DNA-directed RNA polymerase subunit omega (Streptococcus equi subsp. equi (strain 4047)).